A 169-amino-acid chain; its full sequence is Regulator of ribonuclease activity A (169 aa).

This sequence belongs to the RraA family. Homotrimer. Binds to both RNA-binding sites in the C-terminal region of Rne and to RhlB.

The protein localises to the cytoplasm. Its function is as follows. Globally modulates RNA abundance by binding to RNase E (Rne) and regulating its endonucleolytic activity. Can modulate Rne action in a substrate-dependent manner by altering the composition of the degradosome. Modulates RNA-binding and helicase activities of the degradosome. The chain is Regulator of ribonuclease activity A from Photorhabdus laumondii subsp. laumondii (strain DSM 15139 / CIP 105565 / TT01) (Photorhabdus luminescens subsp. laumondii).